The chain runs to 64 residues: Large ribosomal subunit protein bL35 (64 aa).

The span at 1-26 (MPKIKTHRGAAKRFKKTGTGKIKRSK) shows a compositional bias: basic residues. The tract at residues 1–48 (MPKIKTHRGAAKRFKKTGTGKIKRSKAYASHLLGGKSPKRKRNLRKAG) is disordered.

It belongs to the bacterial ribosomal protein bL35 family.

The polypeptide is Large ribosomal subunit protein bL35 (Syntrophomonas wolfei subsp. wolfei (strain DSM 2245B / Goettingen)).